The sequence spans 659 residues: Interferon-induced GTP-binding protein Mx1 (659 aa).

The residue at position 1 (Met1) is an N-acetylmethionine. A disordered region spans residues Met1–Cys40. Residues Asp65–Pro338 enclose the Dynamin-type G domain. A G1 motif region spans residues Gly75–Ser82. Position 75 to 82 (Gly75 to Ser82) interacts with GTP. Residues Val100–Arg102 form a G2 motif region. Positions Asp176–Gly179 are G3 motif. GTP contacts are provided by residues Asp176–Ile180 and Thr245–Asp248. Residues Thr245–Asp248 are G4 motif. The segment at Lys277–Gly280 is G5 motif. The tract at residues Leu339 to Glu364 is bundle signaling element (BSE). Residues Glu364–Cys531 form a middle domain region. The stalk stretch occupies residues Glu365–Glu629. Residues Lys552 to Lys555 form a critical for lipid-binding region. Residues Leu571–Gly659 form the GED domain.

The protein belongs to the TRAFAC class dynamin-like GTPase superfamily. Dynamin/Fzo/YdjA family. In terms of assembly, homooligomer. Oligomerizes into multimeric filamentous or ring-like structures by virtue of its stalk domain. Oligomerization is critical for GTPase activity, protein stability, and recognition of viral target structures. Interacts with TRPC1, TRPC3, TRPC4, TRPC5, TRPC6 and TRPC7. Interacts with HSPA5. Interacts with TUBB/TUBB5. Interacts with DDX39A and DDX39B. In terms of processing, ISGylated.

It is found in the cytoplasm. The protein localises to the endoplasmic reticulum membrane. The protein resides in the perinuclear region. In terms of biological role, interferon-induced dynamin-like GTPase with antiviral activity. The chain is Interferon-induced GTP-binding protein Mx1 (MX1) from Phoca vitulina (Harbor seal).